The following is a 368-amino-acid chain: 3-dehydroquinate synthase (368 aa).

Residues 112–116 (GVIGD), 136–137 (TT), K149, K158, and 176–179 (TLIT) contribute to the NAD(+) site. Residues E191, H256, and H273 each contribute to the Zn(2+) site.

It belongs to the sugar phosphate cyclases superfamily. Dehydroquinate synthase family. Co(2+) is required as a cofactor. Requires Zn(2+) as cofactor. The cofactor is NAD(+).

It localises to the cytoplasm. It catalyses the reaction 7-phospho-2-dehydro-3-deoxy-D-arabino-heptonate = 3-dehydroquinate + phosphate. It functions in the pathway metabolic intermediate biosynthesis; chorismate biosynthesis; chorismate from D-erythrose 4-phosphate and phosphoenolpyruvate: step 2/7. Catalyzes the conversion of 3-deoxy-D-arabino-heptulosonate 7-phosphate (DAHP) to dehydroquinate (DHQ). This chain is 3-dehydroquinate synthase, found in Prochlorococcus marinus (strain NATL2A).